The following is a 607-amino-acid chain: Karyogamy meiotic segregation protein 1 (607 aa).

The disordered stretch occupies residues 83-135 (DDSFANQAEKPSMEQQNSKNSIKEDANEHSVNSAHSKSSSNASPESLNPSQMM). Low complexity predominate over residues 111–132 (HSVNSAHSKSSSNASPESLNPS).

As to quaternary structure, interacts with mcp1 and sad1.

The protein resides in the cytoplasm. It localises to the cytoskeleton. Its subcellular location is the microtubule organizing center. It is found in the spindle pole body. Functionally, has a role in karyogamy, recombination and segregation during meiosis. Although it has been shown to associate with the spindle pole body it is unlikely to be involved in its formation or maintenance. This Schizosaccharomyces pombe (strain 972 / ATCC 24843) (Fission yeast) protein is Karyogamy meiotic segregation protein 1 (kms1).